The following is a 153-amino-acid chain: Ribosome maturation factor RimP (153 aa).

This sequence belongs to the RimP family.

The protein resides in the cytoplasm. Functionally, required for maturation of 30S ribosomal subunits. The polypeptide is Ribosome maturation factor RimP (Clostridium botulinum (strain Alaska E43 / Type E3)).